The following is a 174-amino-acid chain: Shikimate kinase (174 aa).

10–15 (GSGKTA) contributes to the ATP binding site. T14 contacts Mg(2+). Substrate contacts are provided by D32, R56, and G78. ATP is bound at residue R118. Residue R137 participates in substrate binding. R154 lines the ATP pocket.

This sequence belongs to the shikimate kinase family. As to quaternary structure, monomer. Requires Mg(2+) as cofactor.

It localises to the cytoplasm. It carries out the reaction shikimate + ATP = 3-phosphoshikimate + ADP + H(+). The protein operates within metabolic intermediate biosynthesis; chorismate biosynthesis; chorismate from D-erythrose 4-phosphate and phosphoenolpyruvate: step 5/7. Functionally, catalyzes the specific phosphorylation of the 3-hydroxyl group of shikimic acid using ATP as a cosubstrate. The chain is Shikimate kinase from Symbiobacterium thermophilum (strain DSM 24528 / JCM 14929 / IAM 14863 / T).